Here is an 864-residue protein sequence, read N- to C-terminus: MIYSENTDEKSNQHTNNLYKPCEIENKWQEIWDKENLYKTDDKSSKKEKFYALSMFPYPSGNLHMGHVRNYVITDLIARFQRFQGKSLLHPMGWDAFGLPAENAAIERGINPNDWTKKNIAHMKSQLKLLGLSVDWDKEFATCDENYYLWTQFLFLELHKSGLVYQKESEVNWDPIDNTVLANEQVDSEGKSWRSGAKVEKKLLTQWFLKITNYTEELLQDLEKLSEWPERVKIMQENWIGKSKGANIIFKINEFENEKIKVFTTRPDTLFGVTYIAISINNPLINKISDNEILSKLENLKIYLKKNQDKDQKKIGIPTNLKAINPINSNEIPIWIASYVLDEYGTGAVMGVPAHDQRDFEFAKINFIDIKQVIIKDKDNDKSTFKLKNAFTDNGFLINSNNFNGLCNNDAKKQILEQGKINGWAEEEIHYRLRDWLISRQRYWGCPIPIIKCNNCGSIPVNKKNLPVKLPKEIEISSNKINSLGSYKDWVKTTCPKCGNLASRETDTMDTFMCSSWYFLRYPSSKCKTKPFEKDNVNKWLPVDQYVGGVEHAILHLLYARFLTKALRDNNLFDIDEPFKKLLTQGMVQAAAYKNTKTGKYISPKDIKDFNNPTDPNDDSKLEVLFEKMSKSKYNGIDPESVIKKYGADTARMFILFKAPPEKDLEWGDSDVEGQYRFLCRIWKLFLDYRNNESWDNQKNYNREKENSLTKSINIAIKEISNDIKNNQFNTAISELMKFYNSLSSSMIYVNKDLRKDAFKKFCILLAPFAPHIAEEIWNLIGYQKSVHLERWPIFNEDALKEDCYELVIQINGKVRDKINVGIDISEDQIKQKTLTRPNVRKWIDQKTIRKIIIVKGKIMNIVV.

Positions 57-67 match the 'HIGH' region motif; that stretch reads PYPSGNLHMGH. The 'KMSKS' region signature appears at 628-632; it reads KMSKS. Lysine 631 provides a ligand contact to ATP.

It belongs to the class-I aminoacyl-tRNA synthetase family.

The protein resides in the cytoplasm. The enzyme catalyses tRNA(Leu) + L-leucine + ATP = L-leucyl-tRNA(Leu) + AMP + diphosphate. In Prochlorococcus marinus (strain MIT 9515), this protein is Leucine--tRNA ligase.